The following is a 655-amino-acid chain: ATP-dependent RNA helicase mss116, mitochondrial (655 aa).

The transit peptide at 1–56 (MMLGAVRRYGVVHALRASVPRTICRPSNSQLLRCQTSPVTACPQSVRLLHKSSPFF) directs the protein to the mitochondrion. The short motif at 84–113 (DLAERGLVDPKIIRAIVKDMNIKTMTDVQS) is the Q motif element. Residues 116–307 (LREILQGDDV…RKTMKPNFKF (192 aa)) enclose the Helicase ATP-binding domain. 129–136 (AKTGTGKT) is a binding site for ATP. Positions 251–254 (DEAD) match the DEAD box motif. The 163-residue stretch at 341-503 (EFVTKYVEGE…TFATATVDMT (163 aa)) folds into the Helicase C-terminal domain. The interval 594–642 (YRGSSDNMSTRPDYRGGDRDMWASNSRRGREFNSDRRESRFGNHRNADD) is disordered. 2 stretches are compositionally biased toward basic and acidic residues: residues 605-614 (PDYRGGDRDM) and 621-642 (RGRE…NADD).

Belongs to the DEAD box helicase family. DDX18/HAS1 subfamily.

It localises to the mitochondrion matrix. It carries out the reaction ATP + H2O = ADP + phosphate + H(+). ATP-dependent RNA helicase required for mitochondrial splicing of group I and II introns. Also required for efficient mitochondrial translation. The sequence is that of ATP-dependent RNA helicase mss116, mitochondrial (mss116) from Aspergillus fumigatus (strain ATCC MYA-4609 / CBS 101355 / FGSC A1100 / Af293) (Neosartorya fumigata).